Here is a 322-residue protein sequence, read N- to C-terminus: Probable transcription factor KAN3 (322 aa).

The tract at residues Met1 to Glu35 is disordered. Basic and acidic residues predominate over residues Arg17–Glu35. The HTH myb-type domain occupies Gly161 to Ser221. Positions Pro192–Arg217 form a DNA-binding region, H-T-H motif. Disordered stretches follow at residues Thr222–Arg244 and Lys267–Pro322. 2 stretches are compositionally biased toward polar residues: residues Lys224–Asn241 and Leu299–Pro322.

Expressed in developing phloem.

It is found in the nucleus. Probable transcription factor that regulates lateral organ polarity. Plays a role in lateral root formation and development. The sequence is that of Probable transcription factor KAN3 (KAN3) from Arabidopsis thaliana (Mouse-ear cress).